A 166-amino-acid chain; its full sequence is 2-C-methyl-D-erythritol 2,4-cyclodiphosphate synthase (166 aa).

A divalent metal cation contacts are provided by Asp-12 and His-14. Residues 12–14 (DVH) and 38–39 (HS) each bind 4-CDP-2-C-methyl-D-erythritol 2-phosphate. Residue His-46 coordinates a divalent metal cation. 4-CDP-2-C-methyl-D-erythritol 2-phosphate contacts are provided by residues 60–62 (DIG), 136–139 (TTSE), Phe-143, and Arg-146.

This sequence belongs to the IspF family. In terms of assembly, homotrimer. The cofactor is a divalent metal cation.

It carries out the reaction 4-CDP-2-C-methyl-D-erythritol 2-phosphate = 2-C-methyl-D-erythritol 2,4-cyclic diphosphate + CMP. The protein operates within isoprenoid biosynthesis; isopentenyl diphosphate biosynthesis via DXP pathway; isopentenyl diphosphate from 1-deoxy-D-xylulose 5-phosphate: step 4/6. Involved in the biosynthesis of isopentenyl diphosphate (IPP) and dimethylallyl diphosphate (DMAPP), two major building blocks of isoprenoid compounds. Catalyzes the conversion of 4-diphosphocytidyl-2-C-methyl-D-erythritol 2-phosphate (CDP-ME2P) to 2-C-methyl-D-erythritol 2,4-cyclodiphosphate (ME-CPP) with a corresponding release of cytidine 5-monophosphate (CMP). This chain is 2-C-methyl-D-erythritol 2,4-cyclodiphosphate synthase, found in Xanthomonas axonopodis pv. citri (strain 306).